A 109-amino-acid polypeptide reads, in one-letter code: Large ribosomal subunit protein uL24 (109 aa).

Belongs to the universal ribosomal protein uL24 family. As to quaternary structure, part of the 50S ribosomal subunit.

Its function is as follows. One of two assembly initiator proteins, it binds directly to the 5'-end of the 23S rRNA, where it nucleates assembly of the 50S subunit. One of the proteins that surrounds the polypeptide exit tunnel on the outside of the subunit. This is Large ribosomal subunit protein uL24 from Rickettsia massiliae (strain Mtu5).